A 306-amino-acid chain; its full sequence is Large ribosomal subunit protein uL2m (306 aa).

The N-terminal 60 residues, 1–60 (MALCALTSALRSLSLASAAITARVPTLLPAAQIQSNVLLQLPPALVSPSYRPVHMSADRS), are a transit peptide targeting the mitochondrion.

The protein belongs to the universal ribosomal protein uL2 family. In terms of assembly, component of the mitochondrial ribosome large subunit (39S) which comprises a 16S rRNA and about 50 distinct proteins.

It localises to the mitochondrion. The protein is Large ribosomal subunit protein uL2m (Mrpl2) of Mus musculus (Mouse).